Reading from the N-terminus, the 957-residue chain is Glycine dehydrogenase (decarboxylating) (957 aa).

Residue Lys-708 is modified to N6-(pyridoxal phosphate)lysine.

This sequence belongs to the GcvP family. In terms of assembly, the glycine cleavage system is composed of four proteins: P, T, L and H. Pyridoxal 5'-phosphate serves as cofactor.

The catalysed reaction is N(6)-[(R)-lipoyl]-L-lysyl-[glycine-cleavage complex H protein] + glycine + H(+) = N(6)-[(R)-S(8)-aminomethyldihydrolipoyl]-L-lysyl-[glycine-cleavage complex H protein] + CO2. In terms of biological role, the glycine cleavage system catalyzes the degradation of glycine. The P protein binds the alpha-amino group of glycine through its pyridoxal phosphate cofactor; CO(2) is released and the remaining methylamine moiety is then transferred to the lipoamide cofactor of the H protein. The protein is Glycine dehydrogenase (decarboxylating) of Escherichia coli O7:K1 (strain IAI39 / ExPEC).